The sequence spans 273 residues: MLTKRIIPCLDVTLDRAGGCVVKGVEFVDLKEAGDPVELAKRYNEDGADELVFLDITASAHGRETMIDVIERTADEVFIPLTVGGGISSIDAIRQILRAGADKVSVNTSAVKNPDFIKESSDIFGAQCIVTAIDCRRNTDIKNNPDKTVLELEDGTPAWYEVVIYGGREATGIDAVQWAKKAEELGSGEILLTSMDRDGTCAGYDLPITRKLSEELDIPIIASGGVGNPQHIYEGFSEGKADAALAASIFHFSEYSIWEVKEYLREREIPVRL.

Catalysis depends on residues D11 and D134.

It belongs to the HisA/HisF family. As to quaternary structure, heterodimer of HisH and HisF.

Its subcellular location is the cytoplasm. The catalysed reaction is 5-[(5-phospho-1-deoxy-D-ribulos-1-ylimino)methylamino]-1-(5-phospho-beta-D-ribosyl)imidazole-4-carboxamide + L-glutamine = D-erythro-1-(imidazol-4-yl)glycerol 3-phosphate + 5-amino-1-(5-phospho-beta-D-ribosyl)imidazole-4-carboxamide + L-glutamate + H(+). The protein operates within amino-acid biosynthesis; L-histidine biosynthesis; L-histidine from 5-phospho-alpha-D-ribose 1-diphosphate: step 5/9. Its function is as follows. IGPS catalyzes the conversion of PRFAR and glutamine to IGP, AICAR and glutamate. The HisF subunit catalyzes the cyclization activity that produces IGP and AICAR from PRFAR using the ammonia provided by the HisH subunit. This Methanosarcina acetivorans (strain ATCC 35395 / DSM 2834 / JCM 12185 / C2A) protein is Imidazole glycerol phosphate synthase subunit HisF.